The primary structure comprises 601 residues: Elongation factor 4 (601 aa).

Residues 6–188 (QFIRNFSIIA…AITKEIPAPK (183 aa)) enclose the tr-type G domain. Residues 18–23 (DHGKST) and 135–138 (NKID) each bind GTP.

It belongs to the TRAFAC class translation factor GTPase superfamily. Classic translation factor GTPase family. LepA subfamily.

The protein localises to the cell inner membrane. It carries out the reaction GTP + H2O = GDP + phosphate + H(+). Its function is as follows. Required for accurate and efficient protein synthesis under certain stress conditions. May act as a fidelity factor of the translation reaction, by catalyzing a one-codon backward translocation of tRNAs on improperly translocated ribosomes. Back-translocation proceeds from a post-translocation (POST) complex to a pre-translocation (PRE) complex, thus giving elongation factor G a second chance to translocate the tRNAs correctly. Binds to ribosomes in a GTP-dependent manner. This chain is Elongation factor 4, found in Leptospira borgpetersenii serovar Hardjo-bovis (strain JB197).